A 229-amino-acid polypeptide reads, in one-letter code: Thymidylate kinase (229 aa).

9-16 (GPEGSGKS) is an ATP binding site.

It belongs to the thymidylate kinase family.

The enzyme catalyses dTMP + ATP = dTDP + ADP. In terms of biological role, phosphorylation of dTMP to form dTDP in both de novo and salvage pathways of dTTP synthesis. The sequence is that of Thymidylate kinase from Roseiflexus castenholzii (strain DSM 13941 / HLO8).